Here is a 195-residue protein sequence, read N- to C-terminus: Triosephosphate isomerase, cytosolic (195 aa).

Histidine 37 acts as the Electrophile in catalysis. Residue glutamate 107 is the Proton acceptor of the active site.

This sequence belongs to the triosephosphate isomerase family. In terms of assembly, homodimer.

The protein localises to the cytoplasm. It carries out the reaction D-glyceraldehyde 3-phosphate = dihydroxyacetone phosphate. It participates in carbohydrate biosynthesis; gluconeogenesis. Its pathway is carbohydrate degradation; glycolysis; D-glyceraldehyde 3-phosphate from glycerone phosphate: step 1/1. The sequence is that of Triosephosphate isomerase, cytosolic from Lactuca sativa (Garden lettuce).